A 440-amino-acid chain; its full sequence is Chromosome partition protein MukF (440 aa).

The interval 208–236 is leucine-zipper; that stretch reads LDETSGNLRELQDTLNAAGDKLQSQLLRI.

It belongs to the MukF family. As to quaternary structure, interacts, and probably forms a ternary complex, with MukE and MukB via its C-terminal region. The complex formation is stimulated by calcium or magnesium. It is required for an interaction between MukE and MukB.

The protein localises to the cytoplasm. Its subcellular location is the nucleoid. Functionally, involved in chromosome condensation, segregation and cell cycle progression. May participate in facilitating chromosome segregation by condensation DNA from both sides of a centrally located replisome during cell division. Not required for mini-F plasmid partitioning. Probably acts via its interaction with MukB and MukE. Overexpression results in anucleate cells. It has a calcium binding activity. In Histophilus somni (strain 2336) (Haemophilus somnus), this protein is Chromosome partition protein MukF.